A 182-amino-acid chain; its full sequence is ATP-dependent protease subunit HslV (182 aa).

The active site involves Thr12. The Na(+) site is built by Ala167, Cys170, and Thr173.

Belongs to the peptidase T1B family. HslV subfamily. As to quaternary structure, a double ring-shaped homohexamer of HslV is capped on each side by a ring-shaped HslU homohexamer. The assembly of the HslU/HslV complex is dependent on binding of ATP.

The protein localises to the cytoplasm. The enzyme catalyses ATP-dependent cleavage of peptide bonds with broad specificity.. Allosterically activated by HslU binding. In terms of biological role, protease subunit of a proteasome-like degradation complex believed to be a general protein degrading machinery. The polypeptide is ATP-dependent protease subunit HslV (Chlorobium chlorochromatii (strain CaD3)).